Here is a 547-residue protein sequence, read N- to C-terminus: TBCC domain-containing protein 1 (547 aa).

Positions proline 304–leucine 435 constitute a C-CAP/cofactor C-like domain.

It belongs to the TBCC family.

It localises to the cytoplasm. The protein localises to the cytoskeleton. Its subcellular location is the microtubule organizing center. It is found in the centrosome. The protein resides in the spindle pole. May play a role in the regulation of centrosome and Golgi apparatus positioning. This is TBCC domain-containing protein 1 (tbccd1) from Xenopus laevis (African clawed frog).